A 288-amino-acid chain; its full sequence is Rhythmically expressed gene 5 protein (288 aa).

Expressed in head, but not in the body. Expression levels oscillate with the circadian rhythm.

Its function is as follows. Involved in the generation of biological rhythms (Potential). In the head, oscillates in abundance with a daily peak during early night, even under constant darkness. Oscillation is dependent on period (per) function. This is Rhythmically expressed gene 5 protein (Reg-5) from Drosophila melanogaster (Fruit fly).